The primary structure comprises 238 residues: MRPSRRQPDEMRAISFERGVSKHAEGSCLVRFGDTHVLCTASLEEKVPAWLRNSGKGWVTAEYGMLPRSTGERMRREAASGKQGGRTLEIQRLVGRSLRSVIDLEALGEMQITVDCDVLQADGGTRTAAITGGFVALHDCLSWMQARQMVTVERVLKDHVAAISCGIYDGTPVLDLDYAEDSAAETDANFVMTGKGGIVEIQGTAEGAPFTEEEFHELLRLARKGIFRLVELQKMAVS.

Phosphate contacts are provided by residues Arg86 and 124-126; that span reads GTR.

It belongs to the RNase PH family. As to quaternary structure, homohexameric ring arranged as a trimer of dimers.

It carries out the reaction tRNA(n+1) + phosphate = tRNA(n) + a ribonucleoside 5'-diphosphate. Its function is as follows. Phosphorolytic 3'-5' exoribonuclease that plays an important role in tRNA 3'-end maturation. Removes nucleotide residues following the 3'-CCA terminus of tRNAs; can also add nucleotides to the ends of RNA molecules by using nucleoside diphosphates as substrates, but this may not be physiologically important. Probably plays a role in initiation of 16S rRNA degradation (leading to ribosome degradation) during starvation. In Chelativorans sp. (strain BNC1), this protein is Ribonuclease PH.